Reading from the N-terminus, the 485-residue chain is UDP-N-acetylmuramate--L-alanine ligase (485 aa).

120-126 is an ATP binding site; sequence GSHGKTT.

The protein belongs to the MurCDEF family.

Its subcellular location is the cytoplasm. The enzyme catalyses UDP-N-acetyl-alpha-D-muramate + L-alanine + ATP = UDP-N-acetyl-alpha-D-muramoyl-L-alanine + ADP + phosphate + H(+). Its pathway is cell wall biogenesis; peptidoglycan biosynthesis. Cell wall formation. This is UDP-N-acetylmuramate--L-alanine ligase from Rickettsia rickettsii (strain Iowa).